The primary structure comprises 254 residues: Phosphoribosylaminoimidazole-succinocarboxamide synthase (254 aa).

This sequence belongs to the SAICAR synthetase family.

The catalysed reaction is 5-amino-1-(5-phospho-D-ribosyl)imidazole-4-carboxylate + L-aspartate + ATP = (2S)-2-[5-amino-1-(5-phospho-beta-D-ribosyl)imidazole-4-carboxamido]succinate + ADP + phosphate + 2 H(+). It functions in the pathway purine metabolism; IMP biosynthesis via de novo pathway; 5-amino-1-(5-phospho-D-ribosyl)imidazole-4-carboxamide from 5-amino-1-(5-phospho-D-ribosyl)imidazole-4-carboxylate: step 1/2. In Sinorhizobium medicae (strain WSM419) (Ensifer medicae), this protein is Phosphoribosylaminoimidazole-succinocarboxamide synthase.